Here is a 183-residue protein sequence, read N- to C-terminus: UPF0200 protein Memar_1556 (183 aa).

8 to 15 (GMPASGKG) contacts ATP.

The protein belongs to the UPF0200 family.

The protein is UPF0200 protein Memar_1556 of Methanoculleus marisnigri (strain ATCC 35101 / DSM 1498 / JR1).